Consider the following 57-residue polypeptide: Small ribosomal subunit protein bS21 (57 aa).

Residues 32–57 (VRKRKHFEKPSVKRKKKSEAARKRKF) form a disordered region. The span at 33-57 (RKRKHFEKPSVKRKKKSEAARKRKF) shows a compositional bias: basic residues.

It belongs to the bacterial ribosomal protein bS21 family.

This chain is Small ribosomal subunit protein bS21, found in Shouchella clausii (strain KSM-K16) (Alkalihalobacillus clausii).